Consider the following 637-residue polypeptide: Probable potassium transport system protein Kup (637 aa).

12 helical membrane-spanning segments follow: residues 24–44 (LAIA…LYAL), 64–84 (VISL…LLFV), 113–133 (AGAL…DAVI), 151–171 (PHLS…LFWI), 182–202 (LFGP…VYHI), 225–245 (LLQA…AEAL), 261–281 (AYGL…ALLI), 290–310 (PFFL…STVA), 351–371 (IYVP…VIGF), 381–401 (YGIA…VVMV), 409–429 (LLVG…FGAN), and 433–453 (VAQG…LLMT).

It belongs to the HAK/KUP transporter (TC 2.A.72) family.

It localises to the cell inner membrane. The enzyme catalyses K(+)(in) + H(+)(in) = K(+)(out) + H(+)(out). Functionally, transport of potassium into the cell. Likely operates as a K(+):H(+) symporter. In Burkholderia ambifaria (strain MC40-6), this protein is Probable potassium transport system protein Kup.